The primary structure comprises 208 residues: Large ribosomal subunit protein uL4 (208 aa).

A disordered region spans residues 45 to 83 (RQGTHKSKTRAEVRGGGRKPYRQKGTGNARQGSTRSPLM). Polar residues predominate over residues 69–80 (GTGNARQGSTRS).

Belongs to the universal ribosomal protein uL4 family. Part of the 50S ribosomal subunit.

In terms of biological role, one of the primary rRNA binding proteins, this protein initially binds near the 5'-end of the 23S rRNA. It is important during the early stages of 50S assembly. It makes multiple contacts with different domains of the 23S rRNA in the assembled 50S subunit and ribosome. Functionally, forms part of the polypeptide exit tunnel. This Chlorobium luteolum (strain DSM 273 / BCRC 81028 / 2530) (Pelodictyon luteolum) protein is Large ribosomal subunit protein uL4.